A 921-amino-acid chain; its full sequence is Sodium/calcium exchanger 2 (921 aa).

Residues 1–20 form the signal peptide; that stretch reads MAPLALMGVVLLLGVPHCLG. A disordered region spans residues 23–42; that stretch reads TPTPSLPPPTANDSDASPEG. Residues 69-89 traverse the membrane as a helical segment; it reads VARAVVYFVAMVYMFLGVSII. Asn-125 and Asn-130 each carry an N-linked (GlcNAc...) asparagine glycan. 4 helical membrane passes run 131–151, 165–185, 197–217, and 226–246; these read LTLMALGSSAPEILLTVIEVC, IVGSAAFNMFVVIAVCVYVIP, VFFVTASWSIFAYVWLYLILA, and VWEALLTLIFFPVCVVFAWMA. The putative calmodulin-binding region stretch occupies residues 248 to 267; it reads KRLLFYKYVYKRYRTDPRSG. Residues 371–391 form a disordered region; that stretch reads HAADAARRPGATDGAPDDEDD. 2 Calx-beta domains span residues 389 to 482 and 512 to 611; these read EDDG…FVRL and ATVT…FIEL. Positions 407, 443, 468, 469, 471, 473, 476, 518, 519, 520, 536, 598, 599, and 600 each coordinate Ca(2+). A Phosphoserine modification is found at Ser-622. Glu-665 contributes to the Ca(2+) binding site. Helical transmembrane passes span 721-741, 749-769, 786-806, 823-843, 855-875, and 893-913; these read CFDYVMHFLTVFWKVLFACVP, WACFGVCILVIGVLTALIGDL, VVFVALGTSIPDTFASKVAAL, AVNVFLGLGVAWSVAAVYWAV, LAFSVTLFTVFAFVCIAVLLY, and LATTALFLGLWFLYILFSSLE.

This sequence belongs to the Ca(2+):cation antiporter (CaCA) (TC 2.A.19) family. SLC8 subfamily. Detected in kidney cortex, in distal convoluted tubules and connecting segments. Detected in brain and spinal cord (at protein level). Detected in brain, especially in hippocampus CA1, CA2 and CA3 fiels, dentate gyrus, cerebellum and brain cortex.

The protein localises to the cell membrane. It is found in the basolateral cell membrane. It carries out the reaction Ca(2+)(in) + 3 Na(+)(out) = Ca(2+)(out) + 3 Na(+)(in). Calcium transport is down-regulated by Na(+) and stimulated by Ca(2+). Functionally, mediates the electrogenic exchange of Ca(2+) against Na(+) ions across the cell membrane, and thereby contributes to the regulation of cytoplasmic Ca(2+) levels and Ca(2+)-dependent cellular processes. Contributes to cellular Ca(2+) homeostasis in excitable cells. Contributes to the rapid decrease of cytoplasmic Ca(2+) levels back to baseline after neuronal activation, and thereby contributes to modulate synaptic plasticity, learning and memory. Plays a role in regulating urinary Ca(2+) and Na(+) excretion. This chain is Sodium/calcium exchanger 2, found in Mus musculus (Mouse).